The primary structure comprises 728 residues: Phosphoribosylformylglycinamidine synthase subunit PurL (728 aa).

H54 is a catalytic residue. Positions 57 and 96 each coordinate ATP. E98 is a binding site for Mg(2+). Substrate contacts are provided by residues 99-102 (SHNH) and R121. H100 functions as the Proton acceptor in the catalytic mechanism. D122 contributes to the Mg(2+) binding site. Q245 is a substrate binding site. Position 273 (D273) interacts with Mg(2+). 317–319 (ETQ) lines the substrate pocket. ATP-binding residues include D495 and G532. N533 contacts Mg(2+). S535 is a substrate binding site.

Belongs to the FGAMS family. Monomer. Part of the FGAM synthase complex composed of 1 PurL, 1 PurQ and 2 PurS subunits.

It is found in the cytoplasm. It catalyses the reaction N(2)-formyl-N(1)-(5-phospho-beta-D-ribosyl)glycinamide + L-glutamine + ATP + H2O = 2-formamido-N(1)-(5-O-phospho-beta-D-ribosyl)acetamidine + L-glutamate + ADP + phosphate + H(+). It functions in the pathway purine metabolism; IMP biosynthesis via de novo pathway; 5-amino-1-(5-phospho-D-ribosyl)imidazole from N(2)-formyl-N(1)-(5-phospho-D-ribosyl)glycinamide: step 1/2. Part of the phosphoribosylformylglycinamidine synthase complex involved in the purines biosynthetic pathway. Catalyzes the ATP-dependent conversion of formylglycinamide ribonucleotide (FGAR) and glutamine to yield formylglycinamidine ribonucleotide (FGAM) and glutamate. The FGAM synthase complex is composed of three subunits. PurQ produces an ammonia molecule by converting glutamine to glutamate. PurL transfers the ammonia molecule to FGAR to form FGAM in an ATP-dependent manner. PurS interacts with PurQ and PurL and is thought to assist in the transfer of the ammonia molecule from PurQ to PurL. The chain is Phosphoribosylformylglycinamidine synthase subunit PurL from Macrococcus caseolyticus (strain JCSC5402) (Macrococcoides caseolyticum).